Here is a 466-residue protein sequence, read N- to C-terminus: ATP synthase subunit beta, sodium ion specific (466 aa).

ATP is bound at residue 153-160; that stretch reads GGAGVGKT.

Belongs to the ATPase alpha/beta chains family. F-type ATPases have 2 components, CF(1) - the catalytic core - and CF(0) - the membrane proton channel. CF(1) has five subunits: alpha(3), beta(3), gamma(1), delta(1), epsilon(1). CF(0) has three main subunits: a, b and c.

It is found in the cell membrane. The enzyme catalyses 4 Na(+)(in) + ATP + H2O = 4 Na(+)(out) + ADP + phosphate + H(+). With respect to regulation, inhibited by nitrate. Produces ATP from ADP in the presence of a sodium ion gradient across the membrane. The beta chain is the catalytic subunit. The protein is ATP synthase subunit beta, sodium ion specific of Acetobacterium woodii (strain ATCC 29683 / DSM 1030 / JCM 2381 / KCTC 1655 / WB1).